Consider the following 158-residue polypeptide: Large ribosomal subunit protein uL11 (158 aa).

Positions 1 to 28 (MAGTIEALVPGGQATPGPPLGPELGPTP) are disordered.

The protein belongs to the universal ribosomal protein uL11 family. Part of the ribosomal stalk of the 50S ribosomal subunit. Interacts with L10 and the large rRNA to form the base of the stalk. L10 forms an elongated spine to which L12 dimers bind in a sequential fashion forming a multimeric L10(L12)X complex.

Forms part of the ribosomal stalk which helps the ribosome interact with GTP-bound translation factors. This is Large ribosomal subunit protein uL11 from Halorubrum lacusprofundi (strain ATCC 49239 / DSM 5036 / JCM 8891 / ACAM 34).